The sequence spans 411 residues: MGGCGSADSWVEAAPAQGWPAQYGDAANSSYTTTNGATNLTLRWTRSVKGSLAAGPALSARGYLALNGQTPAGCSLMEWQNDNNGRQRWCVRLVQGGGFAGPLFDGFDNLYVGQPGAIISFPPTQWTRWRQPVIGMPSTPRFLGHGRLLVSTHLGQLLVFDTRRGMVVGSPVDLVDGIDPTDATRGLADCAPARPGCPVAAAPAFSSVNGTVVVSVWQPGEPAAKLVGLKYHAEQLVREWTSDAVSAGVLASPVLSADGSTVYVNGRDHRLWALNAADGKAKWSAPLGFLAQTPPALTPHGLIVSGGGPDTALAAFRDAGDHAEGAWRRDDVTALSTASLAGTGVGYTVISGPNHDGTPGLSLLVFDPANGHTVNSYPLPGATGYPVGVSVGNDRRVVTATSDGQVYSFAP.

In Mycobacterium tuberculosis (strain ATCC 25618 / H37Rv), this protein is Protein Rv3035.